A 203-amino-acid chain; its full sequence is Amelogenin, Y isoform (203 aa).

Positions 1-16 (MGTWILFACLVGAAFA) are cleaved as a signal peptide. The interval 116 to 180 (MPVPGQQSMT…PPLPPMFPMR (65 aa)) is disordered. Polar residues predominate over residues 120–130 (GQQSMTPTQHH). The span at 131–142 (QPNLPLPAQQPF) shows a compositional bias: low complexity. The span at 143–180 (QPQPVQPLPHQPMQPQPPVQPMQPLLPQPPLPPMFPMR) shows a compositional bias: pro residues.

It belongs to the amelogenin family.

Its subcellular location is the secreted. It localises to the extracellular space. It is found in the extracellular matrix. Its function is as follows. Plays a role in biomineralization. Seems to regulate the formation of crystallites during the secretory stage of tooth enamel development. Thought to play a major role in the structural organization and mineralization of developing enamel. This Pan troglodytes (Chimpanzee) protein is Amelogenin, Y isoform (AMELY).